The chain runs to 338 residues: Aspartate carbamoyltransferase catalytic subunit (338 aa).

2 residues coordinate carbamoyl phosphate: arginine 72 and threonine 73. Residue lysine 100 coordinates L-aspartate. Carbamoyl phosphate contacts are provided by arginine 122, histidine 152, and glutamine 155. Positions 186 and 243 each coordinate L-aspartate. Residues glycine 284 and proline 285 each contribute to the carbamoyl phosphate site.

It belongs to the aspartate/ornithine carbamoyltransferase superfamily. ATCase family. As to quaternary structure, heterododecamer (2C3:3R2) of six catalytic PyrB chains organized as two trimers (C3), and six regulatory PyrI chains organized as three dimers (R2).

The catalysed reaction is carbamoyl phosphate + L-aspartate = N-carbamoyl-L-aspartate + phosphate + H(+). The protein operates within pyrimidine metabolism; UMP biosynthesis via de novo pathway; (S)-dihydroorotate from bicarbonate: step 2/3. In terms of biological role, catalyzes the condensation of carbamoyl phosphate and aspartate to form carbamoyl aspartate and inorganic phosphate, the committed step in the de novo pyrimidine nucleotide biosynthesis pathway. This is Aspartate carbamoyltransferase catalytic subunit from Acinetobacter baumannii (strain AB307-0294).